Reading from the N-terminus, the 157-residue chain is Peptide methionine sulfoxide reductase MsrA (157 aa).

Residue Cys10 is part of the active site.

Belongs to the MsrA Met sulfoxide reductase family.

It carries out the reaction L-methionyl-[protein] + [thioredoxin]-disulfide + H2O = L-methionyl-(S)-S-oxide-[protein] + [thioredoxin]-dithiol. The catalysed reaction is [thioredoxin]-disulfide + L-methionine + H2O = L-methionine (S)-S-oxide + [thioredoxin]-dithiol. Its function is as follows. Has an important function as a repair enzyme for proteins that have been inactivated by oxidation. Catalyzes the reversible oxidation-reduction of methionine sulfoxide in proteins to methionine. The polypeptide is Peptide methionine sulfoxide reductase MsrA (Clostridium botulinum (strain Hall / ATCC 3502 / NCTC 13319 / Type A)).